Here is a 52-residue protein sequence, read N- to C-terminus: MLAKAMSLLMMFLLVLVIGSVMVSADDAPACPVGTKYDDVLKSCRSLLELQG.

Residues 1–25 form the signal peptide; that stretch reads MLAKAMSLLMMFLLVLVIGSVMVSA.

The protein belongs to the scutigerotoxin-01 family. Post-translationally, contains 1 disulfide bond. As to expression, expressed by the venom gland.

It is found in the secreted. This chain is U-scutigerotoxin(01)-Tl1a, found in Thereuopoda longicornis (Long-legged centipede).